The primary structure comprises 100 residues: MDKSKRPFRKSKRSFRRRLPPIGSGDRIDYRNMSLISQFISEQGKILSRRVNRLTLKQQRLITIAIKQARILSSLPFLNNEKQFERTESIPRTTGPRTRK.

A compositionally biased stretch (basic residues) spans 1–19 (MDKSKRPFRKSKRSFRRRL). The segment at 1-23 (MDKSKRPFRKSKRSFRRRLPPIG) is disordered.

Belongs to the bacterial ribosomal protein bS18 family. Part of the 30S ribosomal subunit.

It localises to the plastid. The protein resides in the chloroplast. The protein is Small ribosomal subunit protein bS18c of Calycanthus floridus var. glaucus (Eastern sweetshrub).